A 117-amino-acid chain; its full sequence is Cell cycle protein GpsB (117 aa).

Positions 32–70 (LDNVIKDYDAFVKENQRLQDENERLLAKVDELTRQVQVG) form a coiled coil.

This sequence belongs to the GpsB family. In terms of assembly, forms polymers through the coiled coil domains. Interacts with PBP1, MreC and EzrA.

It is found in the cytoplasm. Functionally, divisome component that associates with the complex late in its assembly, after the Z-ring is formed, and is dependent on DivIC and PBP2B for its recruitment to the divisome. Together with EzrA, is a key component of the system that regulates PBP1 localization during cell cycle progression. Its main role could be the removal of PBP1 from the cell pole after pole maturation is completed. Also contributes to the recruitment of PBP1 to the division complex. Not essential for septum formation. The chain is Cell cycle protein GpsB from Levilactobacillus brevis (strain ATCC 367 / BCRC 12310 / CIP 105137 / JCM 1170 / LMG 11437 / NCIMB 947 / NCTC 947) (Lactobacillus brevis).